Reading from the N-terminus, the 227-residue chain is tRNA (guanine-N(1)-)-methyltransferase (227 aa).

Residues glycine 112 and 131 to 136 (LGDFVL) each bind S-adenosyl-L-methionine.

It belongs to the RNA methyltransferase TrmD family. As to quaternary structure, homodimer.

The protein resides in the cytoplasm. It catalyses the reaction guanosine(37) in tRNA + S-adenosyl-L-methionine = N(1)-methylguanosine(37) in tRNA + S-adenosyl-L-homocysteine + H(+). Specifically methylates guanosine-37 in various tRNAs. The protein is tRNA (guanine-N(1)-)-methyltransferase of Trichodesmium erythraeum (strain IMS101).